The sequence spans 533 residues: Intestinal-type alkaline phosphatase (533 aa).

The signal sequence occupies residues 1-19 (MQGACVLLLLGLHLQLSLG). Position 61 (Asp61) interacts with Mg(2+). Residues Asp61 and Ser111 each coordinate Zn(2+). Catalysis depends on Ser111, which acts as the Phosphoserine intermediate. Cys140 and Cys202 are disulfide-bonded. Ser174 is a Mg(2+) binding site. Residue Glu235 participates in Ca(2+) binding. The N-linked (GlcNAc...) asparagine glycan is linked to Asn268. Residues Phe288, Glu289, and Asp304 each coordinate Ca(2+). Glu330 is a binding site for Mg(2+). Zn(2+) contacts are provided by Asp335, His339, Asp376, and His377. Asn429 carries N-linked (GlcNAc...) asparagine glycosylation. A Zn(2+)-binding site is contributed by His451. Cysteines 486 and 493 form a disulfide. Asp506 carries GPI-anchor amidated aspartate lipidation. Residues 507–533 (AAHLAASPPPLALLAGAMLLLLAPTLY) constitute a propeptide, removed in mature form.

The protein belongs to the alkaline phosphatase family. Homodimer. Requires Mg(2+) as cofactor. Zn(2+) serves as cofactor. The cofactor is Ca(2+).

It is found in the cell membrane. The enzyme catalyses a phosphate monoester + H2O = an alcohol + phosphate. Its function is as follows. Alkaline phosphatase that can hydrolyze various phosphate compounds. This Bos taurus (Bovine) protein is Intestinal-type alkaline phosphatase (ALPI).